We begin with the raw amino-acid sequence, 752 residues long: Photosystem I P700 chlorophyll a apoprotein A1 (752 aa).

8 helical membrane passes run 73–96 (IFSA…FHGA), 159–182 (LYWT…FHYH), 198–222 (MNHH…HISL), 294–312 (TAHH…GHMY), 349–372 (WHAQ…HHMY), 388–414 (LSLF…IFMV), 436–458 (AIIS…LYIH), and 533–551 (FLVH…LILL). Residues C575 and C584 each coordinate [4Fe-4S] cluster. 2 helical membrane passes run 591 to 612 (HIFL…HFSW) and 666 to 688 (LSAY…MFLF). Residue H677 coordinates chlorophyll a'. 2 residues coordinate chlorophyll a: M685 and Y693. Phylloquinone is bound at residue W694. A helical membrane pass occupies residues 726 to 746 (AVGLAHYLLGGIGTTWSFFLA).

It belongs to the PsaA/PsaB family. As to quaternary structure, the PsaA/B heterodimer binds the P700 chlorophyll special pair and subsequent electron acceptors. PSI consists of a core antenna complex that captures photons, and an electron transfer chain that converts photonic excitation into a charge separation. The eukaryotic PSI reaction center is composed of at least 11 subunits. The cofactor is P700 is a chlorophyll a/chlorophyll a' dimer, A0 is one or more chlorophyll a, A1 is one or both phylloquinones and FX is a shared 4Fe-4S iron-sulfur center..

It localises to the plastid. It is found in the chloroplast thylakoid membrane. It catalyses the reaction reduced [plastocyanin] + hnu + oxidized [2Fe-2S]-[ferredoxin] = oxidized [plastocyanin] + reduced [2Fe-2S]-[ferredoxin]. In terms of biological role, psaA and PsaB bind P700, the primary electron donor of photosystem I (PSI), as well as the electron acceptors A0, A1 and FX. PSI is a plastocyanin/cytochrome c6-ferredoxin oxidoreductase, converting photonic excitation into a charge separation, which transfers an electron from the donor P700 chlorophyll pair to the spectroscopically characterized acceptors A0, A1, FX, FA and FB in turn. Oxidized P700 is reduced on the lumenal side of the thylakoid membrane by plastocyanin or cytochrome c6. This chain is Photosystem I P700 chlorophyll a apoprotein A1, found in Emiliania huxleyi (Coccolithophore).